The chain runs to 145 residues: Large ribosomal subunit protein uL13 (145 aa).

This sequence belongs to the universal ribosomal protein uL13 family. In terms of assembly, part of the 50S ribosomal subunit.

Its function is as follows. This protein is one of the early assembly proteins of the 50S ribosomal subunit, although it is not seen to bind rRNA by itself. It is important during the early stages of 50S assembly. This Staphylococcus saprophyticus subsp. saprophyticus (strain ATCC 15305 / DSM 20229 / NCIMB 8711 / NCTC 7292 / S-41) protein is Large ribosomal subunit protein uL13.